The sequence spans 304 residues: Glycine--tRNA ligase alpha subunit (304 aa).

It belongs to the class-II aminoacyl-tRNA synthetase family. As to quaternary structure, tetramer of two alpha and two beta subunits.

It localises to the cytoplasm. It catalyses the reaction tRNA(Gly) + glycine + ATP = glycyl-tRNA(Gly) + AMP + diphosphate. This Photorhabdus laumondii subsp. laumondii (strain DSM 15139 / CIP 105565 / TT01) (Photorhabdus luminescens subsp. laumondii) protein is Glycine--tRNA ligase alpha subunit.